We begin with the raw amino-acid sequence, 67 residues long: Putative sodium channel alpha-toxin Acra5 (67 aa).

Residues 2 to 65 (RDGYIMIKDT…VYGDRGVICR (64 aa)) enclose the LCN-type CS-alpha/beta domain. 4 disulfides stabilise this stretch: cysteine 13-cysteine 64, cysteine 17-cysteine 40, cysteine 26-cysteine 45, and cysteine 30-cysteine 47. Residue arginine 67 is a propeptide, removed by a carboxypeptidase.

Belongs to the long (4 C-C) scorpion toxin superfamily. Sodium channel inhibitor family. Alpha subfamily. As to expression, expressed by the venom gland.

The protein resides in the secreted. Its function is as follows. Alpha toxins bind voltage-independently at site-3 of sodium channels (Nav) and inhibit the inactivation of the activated channels, thereby blocking neuronal transmission. The polypeptide is Putative sodium channel alpha-toxin Acra5 (Androctonus crassicauda (Arabian fat-tailed scorpion)).